Here is a 231-residue protein sequence, read N- to C-terminus: MKKLSFLFLFLFFYILGSIPTGLVIGKLTQQKDLRNKGSGNIGATNAFRVLGKKWGILVFLLDFCKGFVPLTIFLHFSEFWPTEPSTQTFLQPHLTMKISLLAISPILGHMFSLFNKFKGGKAIATSVGIITSFNPLIGISGIIFFAIFLRLFGYASLSSIMASTLVNIFLWLNYLYCDNFGTLVPIQNQIQKPELFYFSINFATLIIIAKHYSNILRLIKGTENKFNFKK.

The next 6 membrane-spanning stretches (helical) occupy residues 6–26, 55–75, 95–115, 130–150, 152–172, and 196–216; these read FLFLFLFFYILGSIPTGLVIG, WGILVFLLDFCKGFVPLTIFL, LTMKISLLAISPILGHMFSLF, IITSFNPLIGISGIIFFAIFL, LFGYASLSSIMASTLVNIFLW, and LFYFSINFATLIIIAKHYSNI.

The protein belongs to the PlsY family. Probably interacts with PlsX.

Its subcellular location is the cell membrane. It catalyses the reaction an acyl phosphate + sn-glycerol 3-phosphate = a 1-acyl-sn-glycero-3-phosphate + phosphate. It participates in lipid metabolism; phospholipid metabolism. Catalyzes the transfer of an acyl group from acyl-phosphate (acyl-PO(4)) to glycerol-3-phosphate (G3P) to form lysophosphatidic acid (LPA). This enzyme utilizes acyl-phosphate as fatty acyl donor, but not acyl-CoA or acyl-ACP. In Aster yellows witches'-broom phytoplasma (strain AYWB), this protein is Glycerol-3-phosphate acyltransferase.